The chain runs to 474 residues: Peroxisome proliferator-activated receptor alpha (474 aa).

Positions asparagine 106–phenylalanine 180 form a DNA-binding region, nuclear receptor. 2 NR C4-type zinc fingers span residues cysteine 109–cysteine 129 and cysteine 146–cysteine 168. Residues phenylalanine 245–aspartate 472 enclose the NR LBD domain.

This sequence belongs to the nuclear hormone receptor family. NR1 subfamily. Heterodimer with the retinoid X receptor. In terms of tissue distribution, ubiquitous.

Its subcellular location is the nucleus. Functionally, ligand-activated transcription factor. Key regulator of lipid metabolism. Activated by lipids. Receptor for peroxisome proliferators such as hypolipidemic drugs and fatty acids. Once activated by a ligand, the receptor binds to promoter elements of target genes. Regulates the peroxisomal beta-oxidation pathway of fatty acids. The chain is Peroxisome proliferator-activated receptor alpha (ppara) from Xenopus laevis (African clawed frog).